Reading from the N-terminus, the 223-residue chain is Thiamine-phosphate synthase (223 aa).

Residues 37-41 (QFREK) and Asp72 each bind 4-amino-2-methyl-5-(diphosphooxymethyl)pyrimidine. Residues Asp73 and Asp92 each contribute to the Mg(2+) site. A 4-amino-2-methyl-5-(diphosphooxymethyl)pyrimidine-binding site is contributed by Ser110. 136–138 (TQS) serves as a coordination point for 2-[(2R,5Z)-2-carboxy-4-methylthiazol-5(2H)-ylidene]ethyl phosphate. Lys139 is a binding site for 4-amino-2-methyl-5-(diphosphooxymethyl)pyrimidine. 2-[(2R,5Z)-2-carboxy-4-methylthiazol-5(2H)-ylidene]ethyl phosphate is bound by residues Gly168 and 188–189 (IS).

It belongs to the thiamine-phosphate synthase family. Mg(2+) is required as a cofactor.

The catalysed reaction is 2-[(2R,5Z)-2-carboxy-4-methylthiazol-5(2H)-ylidene]ethyl phosphate + 4-amino-2-methyl-5-(diphosphooxymethyl)pyrimidine + 2 H(+) = thiamine phosphate + CO2 + diphosphate. The enzyme catalyses 2-(2-carboxy-4-methylthiazol-5-yl)ethyl phosphate + 4-amino-2-methyl-5-(diphosphooxymethyl)pyrimidine + 2 H(+) = thiamine phosphate + CO2 + diphosphate. It catalyses the reaction 4-methyl-5-(2-phosphooxyethyl)-thiazole + 4-amino-2-methyl-5-(diphosphooxymethyl)pyrimidine + H(+) = thiamine phosphate + diphosphate. Its pathway is cofactor biosynthesis; thiamine diphosphate biosynthesis; thiamine phosphate from 4-amino-2-methyl-5-diphosphomethylpyrimidine and 4-methyl-5-(2-phosphoethyl)-thiazole: step 1/1. Condenses 4-methyl-5-(beta-hydroxyethyl)thiazole monophosphate (THZ-P) and 2-methyl-4-amino-5-hydroxymethyl pyrimidine pyrophosphate (HMP-PP) to form thiamine monophosphate (TMP). In Streptococcus agalactiae serotype III (strain NEM316), this protein is Thiamine-phosphate synthase.